The chain runs to 164 residues: HTH-type transcriptional regulator IscR (164 aa).

An HTH rrf2-type domain is found at 2-131; sequence RLTSKGRYAV…NNITLGELVN (130 aa). The segment at residues 28 to 51 is a DNA-binding region (H-T-H motif); the sequence is LADISERQGISLSYLEQLFSRLRK. Cys92, Cys98, and Cys104 together coordinate [2Fe-2S] cluster.

It depends on [2Fe-2S] cluster as a cofactor.

Its function is as follows. Regulates the transcription of several operons and genes involved in the biogenesis of Fe-S clusters and Fe-S-containing proteins. The sequence is that of HTH-type transcriptional regulator IscR from Salmonella choleraesuis (strain SC-B67).